A 103-amino-acid polypeptide reads, in one-letter code: Movement protein TGB2 (103 aa).

Residues 1–8 lie on the Cytoplasmic side of the membrane; it reads MSFAPPPD. Residues 9-29 form a helical membrane-spanning segment; it reads YSKIYLALGCGLGLGFVVYAS. At 30-70 the chain is on the lumenal side; it reads RVNHLPHVGDNTHNLPHGGQYCDGNKRVLYSGPKSGSSPTN. Residues 71-91 traverse the membrane as a helical segment; the sequence is NLWPFITVIALTLAILLTSCP. At 92–103 the chain is on the cytoplasmic side; it reads RRRVCIRCSQHH.

The protein belongs to the Tymovirales TGBp2 protein family.

It is found in the host endoplasmic reticulum membrane. Functionally, plays a role in viral cell-to-cell propagation, by facilitating genome transport to neighboring plant cells through plasmosdesmata,. This is Movement protein TGB2 from Allium cepa var. aggregatum (Shallot).